Reading from the N-terminus, the 262-residue chain is Probable ketoamine kinase TTHA1179 (262 aa).

79–81 (AYL) serves as a coordination point for ATP. Aspartate 172 (proton acceptor) is an active-site residue.

The protein belongs to the fructosamine kinase family.

The catalysed reaction is N(6)-(D-ribulosyl)-L-lysine + ATP = N(6)-(3-O-phospho-D-ribulosyl)-L-lysine + ADP + H(+). It catalyses the reaction N(6)-(D-erythrulosyl)-L-lysine + ATP = N(6)-(3-O-phospho-D-erythrulosyl)-L-lysine + ADP + H(+). It carries out the reaction N(6)-D-ribulosyl-L-lysyl-[protein] + ATP = N(6)-(3-O-phospho-D-ribulosyl)-L-lysyl-[protein] + ADP + H(+). The enzyme catalyses N(6)-(D-erythrulosyl)-L-lysyl-[protein] + ATP = N(6)-(3-O-phospho-D-erythrulosyl)-L-lysyl-[protein] + ADP + H(+). In terms of biological role, ketoamine kinase that phosphorylates ketoamines, such as erythruloselysine and ribuloselysine, on the third carbon of the sugar moiety to generate ketoamine 3-phosphate. Has higher activity on free lysine (erythruloselysine and ribuloselysine), than on ribuloselysine and erythruloselysine residues on glycated proteins. The chain is Probable ketoamine kinase TTHA1179 from Thermus thermophilus (strain ATCC 27634 / DSM 579 / HB8).